The chain runs to 67 residues: Small ribosomal subunit protein eS27 (67 aa).

Zn(2+) contacts are provided by C22, C25, C41, and C44. The segment at 22–44 (CPDCGNEQVTFSHAAMVVRCLVC) adopts a C4-type zinc-finger fold.

It belongs to the eukaryotic ribosomal protein eS27 family. In terms of assembly, part of the 30S ribosomal subunit. Requires Zn(2+) as cofactor.

The protein is Small ribosomal subunit protein eS27 of Pyrobaculum calidifontis (strain DSM 21063 / JCM 11548 / VA1).